Reading from the N-terminus, the 96-residue chain is Defensin-like protein 151 (96 aa).

Residues 1-29 (MKKPSQLSATILTIFVILAIGVMVKETLG) form the signal peptide. Cystine bridges form between C35–C88, C48–C68, C53–C82, and C57–C84.

The protein belongs to the DEFL family.

The protein localises to the secreted. This is Defensin-like protein 151 (LCR17) from Arabidopsis thaliana (Mouse-ear cress).